A 93-amino-acid polypeptide reads, in one-letter code: Acylphosphatase (93 aa).

An intrachain disulfide couples C5 to C49. One can recognise an Acylphosphatase-like domain in the interval 5–93 (CTIAWIYGRV…ETLTDFSIRY (89 aa)). Residues R20 and N38 contribute to the active site.

Belongs to the acylphosphatase family.

It carries out the reaction an acyl phosphate + H2O = a carboxylate + phosphate + H(+). This Salmonella arizonae (strain ATCC BAA-731 / CDC346-86 / RSK2980) protein is Acylphosphatase.